The following is a 612-amino-acid chain: Glucoamylase (612 aa).

Residues 1–19 (MVSFSSCLRALALGSSVLA) form the signal peptide. A propeptide spanning residues 20 to 25 (VQPVLR) is cleaved from the precursor. Residue Asn-39 is glycosylated (N-linked (GlcNAc...) asparagine). Trp-146 lines the substrate pocket. Asp-202 functions as the Proton acceptor in the catalytic mechanism. Glu-205 functions as the Proton donor in the catalytic mechanism. Cystine bridges form between Cys-236–Cys-239, Cys-248–Cys-475, and Cys-288–Cys-296. A CBM20 domain is found at 506–612 (CQVPTTVSVT…KSAVQSDVWR (107 aa)).

The protein belongs to the glycosyl hydrolase 15 family.

It carries out the reaction Hydrolysis of terminal (1-&gt;4)-linked alpha-D-glucose residues successively from non-reducing ends of the chains with release of beta-D-glucose.. This is Glucoamylase (glaA) from Aspergillus oryzae (strain ATCC 42149 / RIB 40) (Yellow koji mold).